Here is a 342-residue protein sequence, read N- to C-terminus: Putative ABC transporter anion-binding protein HVO_1888 (342 aa).

The tat-type signal signal peptide spans 1–32 (MAIERRRFLQAAGVGAVLGLSGCTGNTSPPQA). Polar residues predominate over residues 24–37 (TGNTSPPQANNETA). Residues 24–52 (TGNTSPPQANNETAEGSGGSESGDGSTQE) are disordered.

In terms of assembly, the complex is composed of two ATP-binding proteins (HVO_1886), two transmembrane proteins (HVO_1887) and a solute-binding protein (HVO_1888). In terms of processing, predicted to be exported by the Tat system. The position of the signal peptide cleavage has not been experimentally proven.

Part of an ABC transporter complex involved in anions import. In Haloferax volcanii (strain ATCC 29605 / DSM 3757 / JCM 8879 / NBRC 14742 / NCIMB 2012 / VKM B-1768 / DS2) (Halobacterium volcanii), this protein is Putative ABC transporter anion-binding protein HVO_1888.